Consider the following 3388-residue polypeptide: Genome polyprotein (3388 aa).

The interval 1–15 (MNDQRKKARNTPFNM) is interaction with host EXOC1. At 1-101 (MNDQRKKARN…LNILNRRRRT (101 aa)) the chain is on the cytoplasmic side. Residues 37–72 (MLQGRGPLKLFMALVAFLRFLTIPPTAGILKRWGTI) are hydrophobic; homodimerization of capsid protein C. A propeptide spans 101–114 (TAGMIIMLIPTVMA) (ER anchor for the capsid protein C, removed in mature form by serine protease NS3). Residues 102-122 (AGMIIMLIPTVMAFHLTTRNG) form a helical membrane-spanning segment. Over 123–238 (EPHMIVSRQE…GAWKHAQRIE (116 aa)) the chain is Extracellular. N-linked (GlcNAc...) asparagine; by host glycosylation occurs at Asn-183. The helical transmembrane segment at 239 to 259 (TWILRHPGFTIMAAILAYTIG) threads the bilayer. At 260 to 265 (TTHFQR) the chain is on the cytoplasmic side. A helical transmembrane segment spans residues 266–280 (VLIFILLTAIAPSMT). At 281–725 (MRCIGISNRD…LHQVFGAIYG (445 aa)) the chain is on the extracellular side. Disulfide bonds link Cys-283–Cys-310, Cys-340–Cys-401, Cys-354–Cys-385, and Cys-372–Cys-396. A glycan (N-linked (GlcNAc...) asparagine; by host) is linked at Asn-347. Residues 378 to 391 (DRGWGNGCGLFGKG) are fusion peptide. An N-linked (GlcNAc...) asparagine; by host glycan is attached at Asn-433. Disulfide bonds link Cys-465-Cys-565 and Cys-582-Cys-613. A helical membrane pass occupies residues 726-746 (AAFSGVSWTMKILIGVIITWI). The Cytoplasmic segment spans residues 747–752 (GMNSRS). A helical membrane pass occupies residues 753-773 (TSLSVSLVLVGIVTLYLGVMV). At 774–1195 (QADSGCVVSW…MVGATMTDDI (422 aa)) the chain is on the extracellular side. 6 disulfides stabilise this stretch: Cys-779-Cys-790, Cys-830-Cys-918, Cys-954-Cys-998, Cys-1055-Cys-1104, Cys-1066-Cys-1088, and Cys-1087-Cys-1091. N-linked (GlcNAc...) asparagine; by host glycosylation is found at Asn-905 and Asn-982. Residue Asn-1134 is glycosylated (N-linked (GlcNAc...) asparagine; by host). A helical membrane pass occupies residues 1196–1220 (GMGVTYLALLAAFKVRPTFAAGLLL). The Cytoplasmic portion of the chain corresponds to 1221–1226 (RKLTSK). A helical transmembrane segment spans residues 1227–1245 (ELMMTTIGIVLLSQSSIPE). Residues 1246–1269 (TILELTDALALGMMVLKMVRNMEK) lie on the Lumenal side of the membrane. Residues 1270–1290 (YQLAVTIMAILCVPNAVILQN) form a helical membrane-spanning segment. Position 1291 (Ala-1291) is a topological domain, cytoplasmic. Residues 1292-1310 (WKVSCTILAVVSVSPLFLT) form a helical membrane-spanning segment. Topologically, residues 1311–1317 (SSQQKAD) are lumenal. A helical transmembrane segment spans residues 1318–1338 (WIPLALTIKGLNPTAIFLTTL). The Cytoplasmic portion of the chain corresponds to 1339-1346 (SRTSKKRS). A helical transmembrane segment spans residues 1347 to 1367 (WPLNEAIMAVGMVSILASSLL). Topologically, residues 1368–1370 (KND) are lumenal. The chain crosses the membrane as a helical span at residues 1371 to 1391 (TPMTGPLVAGGLLTVCYVLTG). Topologically, residues 1392-1447 (RSADLELERATDVKWDDQAEISGSSPILSITISEDGSMSIKNEEEEQTLTILIRTG) are cytoplasmic. An interacts with and activates NS3 protease region spans residues 1398–1437 (LERATDVKWDDQAEISGSSPILSITISEDGSMSIKNEEEE). Residues 1448 to 1468 (LLVISGLFPVSIPITAAAWYL) constitute an intramembrane region (helical). Residues 1469-2144 (WEVKKQRAGV…LSELPETLET (676 aa)) lie on the Cytoplasmic side of the membrane. One can recognise a Peptidase S7 domain in the interval 1476-1653 (AGVLWDVPSP…EKSIEDNPEI (178 aa)). Active-site charge relay system; for serine protease NS3 activity residues include His-1526, Asp-1550, and Ser-1610. Residues 1655-1811 (DDIFRKRRLT…QSNAPIMDEE (157 aa)) form the Helicase ATP-binding domain. Residues 1659–1662 (RKRR) are important for RNA-binding. ATP is bound at residue 1668–1675 (LHPGAGKT). The DEAH box signature appears at 1759–1762 (DEAH). The Helicase C-terminal domain occupies 1821-1988 (SGHEWVTDFK…IIPSMFEPER (168 aa)). At Lys-1863 the chain carries N6-acetyllysine; by host. Residues 2145-2165 (LLLLTLLATVTGGIFLFLMSG) traverse the membrane as a helical segment. At 2166–2167 (RG) the chain is on the lumenal side. Positions 2168–2188 (IGKMTLGMCCIITASILLWYA) form an intramembrane region, helical. Position 2189 (Gln-2189) is a topological domain, lumenal. Residues 2190-2210 (IQPHWIAASIILEFFLIVLLI) traverse the membrane as a helical segment. Over 2211 to 2225 (PEPEKQRTPQDNQLT) the chain is Cytoplasmic. The chain crosses the membrane as a helical span at residues 2226–2246 (YVIIAILTVVAATMANEMGFL). Residues 2247 to 2271 (EKTKKDLGLGNIATQQPESNILDID) lie on the Lumenal side of the membrane. The segment at residues 2272–2292 (LRPASAWTLYAVATTFITPML) is an intramembrane region (helical). The Lumenal segment spans residues 2293–2313 (RHSIENSSVNVSLTAIANQAT). Residues Asn-2298 and Asn-2302 are each glycosylated (N-linked (GlcNAc...) asparagine; by host). The segment at residues 2314–2334 (VLMGLGKGWPLSKMDIGVPLL) is an intramembrane region (helical). Over 2335 to 2344 (AIGCYSQVNP) the chain is Lumenal. A helical membrane pass occupies residues 2345–2365 (ITLTAALLLLVAHYAIIGPGL). Residues 2366 to 2410 (QAKATREAQKRAAAGIMKNPTVDGITVIDLDPIPYDPKFEKQLGQ) are Cytoplasmic-facing. The helical transmembrane segment at 2411–2431 (VMLLVLCVTQVLMMRTTWALC) threads the bilayer. Topologically, residues 2432 to 2456 (EALTLATGPVSTLWEGNPGRFWNTT) are lumenal. The N-linked (GlcNAc...) asparagine; by host glycan is linked to Asn-2454. A helical membrane pass occupies residues 2457 to 2477 (IAVSMANIFRGSYLAGAGLLF). Residues 2478 to 3388 (SIMKNTTSTR…REEEEAGVLW (911 aa)) are Cytoplasmic-facing. An mRNA cap 0-1 NS5-type MT domain is found at 2490-2752 (TGNIGETLGE…DVDLGSGTRN (263 aa)). Position 2544 (Ser-2544) interacts with S-adenosyl-L-methionine. Ser-2544 carries the phosphoserine modification. The active-site For 2'-O-MTase activity is the Lys-2549. Residues 2565–2568 (VVDL) carry the SUMO-interacting motif motif. S-adenosyl-L-methionine-binding residues include Gly-2574, Trp-2575, Thr-2592, Lys-2593, Asp-2619, and Val-2620. The active-site For 2'-O-MTase activity is Asp-2634. Ile-2635 serves as a coordination point for S-adenosyl-L-methionine. Catalysis depends on for 2'-O-MTase activity residues Lys-2669 and Glu-2705. Position 2707 (Tyr-2707) interacts with S-adenosyl-L-methionine. 4 residues coordinate Zn(2+): Glu-2926, His-2930, Cys-2935, and Cys-2938. Residues 3017-3166 (AMYADDTAGW…PLDDRFARAL (150 aa)) enclose the RdRp catalytic domain. Residues His-3200, Cys-3216, and Cys-3335 each coordinate Zn(2+).

It in the N-terminal section; belongs to the class I-like SAM-binding methyltransferase superfamily. mRNA cap 0-1 NS5-type methyltransferase family. In terms of assembly, homodimer. Interacts (via N-terminus) with host EXOC1 (via C-terminus); this interaction results in EXOC1 degradation through the proteasome degradation pathway. As to quaternary structure, forms heterodimers with envelope protein E in the endoplasmic reticulum and Golgi. Homodimer; in the endoplasmic reticulum and Golgi. Interacts with protein prM. Interacts with non-structural protein 1. In terms of assembly, homodimer; Homohexamer when secreted. Interacts with envelope protein E. Interacts with host PRKAA1. As to quaternary structure, interacts (via N-terminus) with serine protease NS3. Forms a heterodimer with serine protease NS3. May form homooligomers. In terms of assembly, forms a heterodimer with NS2B. Interacts with NS4B. Interacts with unphosphorylated RNA-directed RNA polymerase NS5; this interaction stimulates RNA-directed RNA polymerase NS5 guanylyltransferase activity. Interacts with host SHFL. As to quaternary structure, interacts with host MAVS; this interaction inhibits the synthesis of IFN-beta. Interacts with host SHFL. Interacts with host AUP1; the interaction occurs in the presence of Dengue virus NS4B and induces lipophagy which facilitates production of virus progeny particles. May interact with host SRPRA and SEC61G. Interacts with serine protease NS3. In terms of assembly, homodimer. Interacts with host STAT2; this interaction inhibits the phosphorylation of the latter, and, when all viral proteins are present (polyprotein), targets STAT2 for degradation. Interacts with serine protease NS3. Interacts with host PAF1 complex; the interaction may prevent the recruitment of the PAF1 complex to interferon-responsive genes, and thus reduces the immune response. Specific enzymatic cleavages in vivo yield mature proteins. Cleavages in the lumen of endoplasmic reticulum are performed by host signal peptidase, whereas cleavages in the cytoplasmic side are performed by serine protease NS3. Signal cleavage at the 2K-4B site requires a prior NS3 protease-mediated cleavage at the 4A-2K site. Post-translationally, cleaved in post-Golgi vesicles by a host furin, releasing the mature small envelope protein M, and peptide pr. This cleavage is incomplete as up to 30% of viral particles still carry uncleaved prM. In terms of processing, N-glycosylated. N-glycosylated. The excreted form is glycosylated and this is required for efficient secretion of the protein from infected cells. Post-translationally, acetylated by host KAT5. Acetylation modulates NS3 RNA-binding and unwinding activities and plays an important positive role for viral replication. In terms of processing, sumoylation of RNA-directed RNA polymerase NS5 increases NS5 protein stability allowing proper viral RNA replication. Phosphorylated on serines residues. This phosphorylation may trigger NS5 nuclear localization.

It is found in the virion. The protein localises to the host nucleus. Its subcellular location is the host cytoplasm. It localises to the host perinuclear region. The protein resides in the secreted. It is found in the virion membrane. The protein localises to the host endoplasmic reticulum membrane. Its subcellular location is the host mitochondrion. It carries out the reaction Selective hydrolysis of -Xaa-Xaa-|-Yaa- bonds in which each of the Xaa can be either Arg or Lys and Yaa can be either Ser or Ala.. The catalysed reaction is RNA(n) + a ribonucleoside 5'-triphosphate = RNA(n+1) + diphosphate. It catalyses the reaction a ribonucleoside 5'-triphosphate + H2O = a ribonucleoside 5'-diphosphate + phosphate + H(+). The enzyme catalyses ATP + H2O = ADP + phosphate + H(+). It carries out the reaction a 5'-end (5'-triphosphoguanosine)-ribonucleoside in mRNA + S-adenosyl-L-methionine = a 5'-end (N(7)-methyl 5'-triphosphoguanosine)-ribonucleoside in mRNA + S-adenosyl-L-homocysteine. The catalysed reaction is a 5'-end (N(7)-methyl 5'-triphosphoguanosine)-ribonucleoside in mRNA + S-adenosyl-L-methionine = a 5'-end (N(7)-methyl 5'-triphosphoguanosine)-(2'-O-methyl-ribonucleoside) in mRNA + S-adenosyl-L-homocysteine + H(+). Functionally, plays a role in virus budding by binding to the cell membrane and gathering the viral RNA into a nucleocapsid that forms the core of a mature virus particle. During virus entry, may induce genome penetration into the host cytoplasm after hemifusion induced by the surface proteins. Can migrate to the cell nucleus where it modulates host functions. Overcomes the anti-viral effects of host EXOC1 by sequestering and degrading the latter through the proteasome degradation pathway. In terms of biological role, inhibits RNA silencing by interfering with host Dicer. Its function is as follows. Prevents premature fusion activity of envelope proteins in trans-Golgi by binding to envelope protein E at pH6.0. After virion release in extracellular space, gets dissociated from E dimers. Acts as a chaperone for envelope protein E during intracellular virion assembly by masking and inactivating envelope protein E fusion peptide. prM is the only viral peptide matured by host furin in the trans-Golgi network probably to avoid catastrophic activation of the viral fusion activity in acidic Golgi compartment prior to virion release. prM-E cleavage is inefficient, and many virions are only partially matured. These uncleaved prM would play a role in immune evasion. Functionally, may play a role in virus budding. Exerts cytotoxic effects by activating a mitochondrial apoptotic pathway through M ectodomain. May display a viroporin activity. In terms of biological role, binds to host cell surface receptor and mediates fusion between viral and cellular membranes. Envelope protein is synthesized in the endoplasmic reticulum in the form of heterodimer with protein prM. They play a role in virion budding in the ER, and the newly formed immature particle is covered with 60 spikes composed of heterodimer between precursor prM and envelope protein E. The virion is transported to the Golgi apparatus where the low pH causes dissociation of PrM-E heterodimers and formation of E homodimers. prM-E cleavage is inefficient, and many virions are only partially matured. These uncleaved prM would play a role in immune evasion. Its function is as follows. Involved in immune evasion, pathogenesis and viral replication. Once cleaved off the polyprotein, is targeted to three destinations: the viral replication cycle, the plasma membrane and the extracellular compartment. Essential for viral replication. Required for formation of the replication complex and recruitment of other non-structural proteins to the ER-derived membrane structures. Excreted as a hexameric lipoparticle that plays a role against host immune response. Antagonizing the complement function. Binds to the host macrophages and dendritic cells. Inhibits signal transduction originating from Toll-like receptor 3 (TLR3). Mediates complement activation, which may contribute to the pathogenesis of the vascular leakage that occurs in severe dengue disease. Activates autophagy through the AMPK/ERK/mTOR signaling pathway. Mechanistically, acts as the assembly platform for STK11-AMPK interactions and promotes STK11-AMPK interactions. In turn, promotes phosphorylation of the AMPK kinase structural domain and activates AMPK, thereby positively regulating the AMPK/ERK/mTOR signaling pathway and inducing autophagy. Disrupts the host endothelial glycocalyx layer of host pulmonary microvascular endothelial cells, inducing degradation of sialic acid and shedding of heparan sulfate proteoglycans. NS1 induces expression of sialidases, heparanase, and activates cathepsin L, which activates heparanase via enzymatic cleavage. These effects are probably linked to the endothelial hyperpermeability observed in severe dengue disease. Functionally, component of the viral RNA replication complex that functions in virion assembly and antagonizes the host immune response. In terms of biological role, required cofactor for the serine protease function of NS3. May have membrane-destabilizing activity and form viroporins. Its function is as follows. Displays three enzymatic activities: serine protease, NTPase and RNA helicase. NS3 serine protease, in association with NS2B, performs its autocleavage and cleaves the polyprotein at dibasic sites in the cytoplasm: C-prM, NS2A-NS2B, NS2B-NS3, NS3-NS4A, NS4A-2K and NS4B-NS5. NS3 RNA helicase binds RNA and unwinds dsRNA in the 3' to 5' direction. Regulates the ATPase activity of the NS3 helicase activity. NS4A allows NS3 helicase to conserve energy during unwinding. Plays a role in the inhibition of the host innate immune response. Interacts with host MAVS and thereby prevents the interaction between RIGI and MAVS. In turn, IFN-beta production is impaired. Interacts with host AUP1 which mediates induction of lipophagy in host cells and facilitates production of virus progeny particles. Functionally, functions as a signal peptide for NS4B and is required for the interferon antagonism activity of the latter. In terms of biological role, induces the formation of ER-derived membrane vesicles where the viral replication takes place. Inhibits interferon (IFN)-induced host STAT1 phosphorylation and nuclear translocation, thereby preventing the establishment of cellular antiviral state by blocking the IFN-alpha/beta pathway. Its function is as follows. Replicates the viral (+) and (-) RNA genome, and performs the capping of genomes in the cytoplasm. NS5 methylates viral RNA cap at guanine N-7 and ribose 2'-O positions. Besides its role in RNA genome replication, also prevents the establishment of cellular antiviral state by blocking the interferon-alpha/beta (IFN-alpha/beta) signaling pathway. Inhibits host TYK2 and STAT2 phosphorylation, thereby preventing activation of JAK-STAT signaling pathway. May reduce immune responses by preventing the recruitment of the host PAF1 complex to interferon-responsive genes. In Aedimorphus (Red guenon), this protein is Genome polyprotein.